The chain runs to 1447 residues: Adhesion G protein-coupled receptor L3 (1447 aa).

The first 19 residues, 1 to 19 (MWPSQLLIFMMLLAPIIHA), serve as a signal peptide directing secretion. Topologically, residues 20-862 (FSRAPIPMAV…VKHSDAVHDL (843 aa)) are extracellular. Residues 35 to 124 (SCESYPIELR…KYLEVQYECV (90 aa)) form the SUEL-type lectin domain. 5 cysteine pairs are disulfide-bonded: cysteine 36-cysteine 66, cysteine 45-cysteine 123, cysteine 78-cysteine 110, cysteine 91-cysteine 97, and cysteine 135-cysteine 317. Asparagine 93 carries N-linked (GlcNAc...) asparagine glycosylation. Positions 134–393 (LCPGLLKGVY…VVKYSLDFGP (260 aa)) constitute an Olfactomedin-like domain. The interval 249–279 (YHDTSPYRWGGKSDIDLAVDENGLWVIYATE) is interaction with FLRT3. 4 residues coordinate Ca(2+): aspartate 264, asparagine 312, alanine 313, and valine 367. The tract at residues 426-473 (DISTTGPLGMGSTTTSTTLRTTTLSPGRSTTPSVSGRRNRSTSTPSPA) is disordered. The segment covering 428–458 (STTGPLGMGSTTTSTTLRTTTLSPGRSTTPS) has biased composition (low complexity). 6 N-linked (GlcNAc...) asparagine glycosylation sites follow: asparagine 464, asparagine 549, asparagine 746, asparagine 759, asparagine 804, and asparagine 830. The GAIN-B domain occupies 675-854 (DIVRENTDNI…AVLMAHVEVK (180 aa)). 2 disulfide bridges follow: cysteine 805–cysteine 836 and cysteine 824–cysteine 838. Positions 805–854 (CSFWSYSKRTMTGYWSTQGCRLLTTNKTHTTCSCNHLTNFAVLMAHVEVK) are GPS. The tract at residues 842–855 (TNFAVLMAHVEVKH) is stachel. Residues 863–888 (LLDVITWVGILLSLVCLLICIFTFCF) form a helical membrane-spanning segment. Residues 889 to 896 (FRGLQSDR) lie on the Cytoplasmic side of the membrane. The helical transmembrane segment at 897–918 (NTIHKNLCISLFVAELLFLIGI) threads the bilayer. Over 919–926 (NRTDQPIA) the chain is Extracellular. The chain crosses the membrane as a helical span at residues 927–950 (CAVFAALLHFFFLAAFTWMFLEGV). Residues cysteine 927 and cysteine 999 are joined by a disulfide bond. The Cytoplasmic segment spans residues 951 to 967 (QLYIMLVEVFESEHSRR). Residues 968–990 (KYFYLVGYGMPALIVAVSAAVDY) traverse the membrane as a helical segment. Topologically, residues 991 to 1005 (RSYGTDKVCWLRLDT) are extracellular. The helical transmembrane segment at 1006–1027 (YFIWSFIGPATLIIMLNVIFLG) threads the bilayer. The Cytoplasmic portion of the chain corresponds to 1028–1053 (IALYKMFHHTAILKPESGCLDNIKSW). The chain crosses the membrane as a helical span at residues 1054-1073 (VIGAIALLCLLGLTWAFGLM). At 1074-1078 (YINES) the chain is on the extracellular side. N-linked (GlcNAc...) asparagine glycosylation is present at asparagine 1076. Residues 1079–1104 (TVIMAYLFTIFNSLQGMFIFIFHCVL) traverse the membrane as a helical segment. The Cytoplasmic portion of the chain corresponds to 1105–1447 (QKKVRKEYGK…KGPAHLVTSL (343 aa)). The disordered stretch occupies residues 1123 to 1147 (GKSTESSIGSGKTSGSRTPGRYSTG). Serine 1164 carries the phosphoserine modification. Residues 1423-1447 (IVPPNKDGTPPEGSSKGPAHLVTSL) form a disordered region. A PDZ-binding motif is present at residues 1442 to 1447 (HLVTSL).

It belongs to the G-protein coupled receptor 2 family. LN-TM7 subfamily. In terms of assembly, heterodimer of 2 chains generated by proteolytic processing; the large extracellular N-terminal fragment and the membrane-bound C-terminal fragment predominantly remain associated and non-covalently linked. Interacts (via olfactomedin-like domain) with FLRT1 (via extracellular domain). Interacts (via olfactomedin-like domain) with FLRT2 (via extracellular domain). Interacts (via olfactomedin-like domain) with FLRT3 (via extracellular domain); the interaction is direct. Interacts (via extracellular domain) with TENM1. Interacts (via extracellular domain) with TENM2. Interacts (via extracellular domain) with TENM3. Identified in a complex with FLRT3 and UNC5B; does not interact with UNC5B by itself. Identified in a complex with FLRT3 and UNC5D; does not interact with UNC5D by itself. Interacts (via PDZ-binding motif) with SHANK3. Interacts (via PDZ-binding motif) with DLG4. Autoproteolytically processed at the GPS region of the GAIN-B domain; this cleavage modulates receptor activity.

The protein resides in the cell membrane. It localises to the postsynaptic cell membrane. It is found in the cell projection. The protein localises to the axon. Its subcellular location is the cell junction. Forms a heterodimer of 2 chains generated by proteolytic processing that remain associated through non-covalent interactions mediated by the GAIN-B domain. In the inactivated receptor, the Stachel sequence (also named stalk) is embedded in the GAIN-B domain, where it adopts a beta-strand conformation. On activation, the Stachel moves into the 7 transmembrane region and adopts a twisted hook-shaped configuration that forms contacts within the receptor, leading to coupling of a G-alpha protein, which activates signaling. The cleaved GAIN-B and N-terminal domains can then dissociate from the rest of the receptor. In terms of biological role, orphan adhesion G-protein coupled receptor (aGPCR), which mediates synapse specificity. Ligand binding causes a conformation change that triggers signaling via guanine nucleotide-binding proteins (G proteins) and modulates the activity of downstream effectors. ADGRL3 is coupled with different classes of G alpha proteins, such as G(12)/G(13), G(s), G(i) or G(q), depending on the context. Coupling to G(12)/G(13) G proteins, which mediates the activation Rho small GTPases is the most efficient. Following G-protein coupled receptor activation, associates with cell adhesion molecules that are expressed at the surface of adjacent cells to direct synapse specificity. Specifically mediates the establishment of Schaffer-collateral synapses formed by CA3-region axons on CA1-region pyramidal neurons in the hippocampus. Localizes to postsynaptic spines in excitatory synapses in the S.oriens and S.radiatum and interacts with presynaptic cell adhesion molecules FLRT3 and TENM2, promoting synapse formation. Plays a role in the development of glutamatergic synapses in the cortex. Important in determining the connectivity rates between the principal neurons in the cortex. Orphan adhesion G-protein coupled receptor (aGPCR), which mediates synapse specificity. Ligand binding causes a conformation change that triggers signaling via guanine nucleotide-binding proteins (G proteins) and modulates the activity of downstream effectors, such as adenylate cyclase. Isoform 1 is specifically coupled to G(s) G proteins and mediates activation of adenylate cyclase activity. Following G-protein coupled receptor activation, undergoes liquid-liquid phase transition, associates with (1) cell adhesion molecules that are expressed at the surface of adjacent cells, as well as (2) PDZ-containing proteins, such as SHANK3 and DLG4, in the cytoplasm to direct synapse formation. The polypeptide is Adhesion G protein-coupled receptor L3 (Homo sapiens (Human)).